The sequence spans 163 residues: Putative NOL1/NOP2/Sun domain family member 5B (163 aa).

The Nucleophile role is filled by Cys-93.

The protein belongs to the class I-like SAM-binding methyltransferase superfamily. RsmB/NOP family. As to expression, ubiquitous.

This is Putative NOL1/NOP2/Sun domain family member 5B (NSUN5P1) from Homo sapiens (Human).